The chain runs to 600 residues: UvrABC system protein C (600 aa).

The GIY-YIG domain maps to 15–92 (EKPGCYLMKD…IKKYQPYYNV (78 aa)). Residues 197 to 232 (GAVKQDLTQKMEQASEQLEFERAAEIRDQLKYIEET) enclose the UVR domain.

Belongs to the UvrC family. As to quaternary structure, interacts with UvrB in an incision complex.

Its subcellular location is the cytoplasm. Functionally, the UvrABC repair system catalyzes the recognition and processing of DNA lesions. UvrC both incises the 5' and 3' sides of the lesion. The N-terminal half is responsible for the 3' incision and the C-terminal half is responsible for the 5' incision. The sequence is that of UvrABC system protein C from Lactobacillus helveticus (strain DPC 4571).